Here is a 74-residue protein sequence, read N- to C-terminus: UPF0291 protein EF_0064 (74 aa).

Residues 53–74 (YDPTGEDVTPEKLKEEQQKYFD) form a disordered region. Positions 61–74 (TPEKLKEEQQKYFD) are enriched in basic and acidic residues.

This sequence belongs to the UPF0291 family.

It is found in the cytoplasm. The chain is UPF0291 protein EF_0064 from Enterococcus faecalis (strain ATCC 700802 / V583).